A 230-amino-acid polypeptide reads, in one-letter code: Ion-translocating oxidoreductase complex subunit E (230 aa).

Topologically, residues 1–17 are cytoplasmic; sequence MSENRTLMLNGMWNNNP. 2 helical membrane passes run 18–38 and 39–59; these read ALVQ…VTNA and LGLG…VSLV. At 60 to 68 the chain is on the cytoplasmic side; the sequence is RDYVPKEVR. The helical transmembrane segment at 69–89 threads the bilayer; that stretch reads IPVFVMIIASLVTCVQLLMNA. Topologically, residues 90–92 are periplasmic; it reads YAY. The helical transmembrane segment at 93–113 threads the bilayer; it reads GLYLSLGIFIPLIVTNCIIIG. The Cytoplasmic segment spans residues 114–123; the sequence is RAEAFASKND. Residues 124–144 form a helical membrane-spanning segment; that stretch reads VLPAALDGFWMGLGMTSVLVV. Residues 145–181 are Periplasmic-facing; the sequence is LGSLREIIGNGTLFDGADLLLGEWAKVLRIEVFHFDS. The helical transmembrane segment at 182–202 threads the bilayer; the sequence is AFLLALLPPGAFIGVGFLIAA. At 203-230 the chain is on the cytoplasmic side; that stretch reads KSVIDKQIAARQPKQQKQAIERARVTNV.

The protein belongs to the NqrDE/RnfAE family. As to quaternary structure, the complex is composed of six subunits: RnfA, RnfB, RnfC, RnfD, RnfE and RnfG.

Its subcellular location is the cell inner membrane. Part of a membrane-bound complex that couples electron transfer with translocation of ions across the membrane. The polypeptide is Ion-translocating oxidoreductase complex subunit E (Vibrio cholerae serotype O1 (strain ATCC 39541 / Classical Ogawa 395 / O395)).